A 210-amino-acid chain; its full sequence is Large ribosomal subunit protein uL4 (210 aa).

Residues 41-52 are compositionally biased toward polar residues; the sequence is QTNARQGTASTK. The tract at residues 41-71 is disordered; the sequence is QTNARQGTASTKTRAEVRGGGRKPWRQKGTG. Positions 60-71 are enriched in basic residues; the sequence is GGRKPWRQKGTG.

It belongs to the universal ribosomal protein uL4 family. In terms of assembly, part of the 50S ribosomal subunit.

Functionally, one of the primary rRNA binding proteins, this protein initially binds near the 5'-end of the 23S rRNA. It is important during the early stages of 50S assembly. It makes multiple contacts with different domains of the 23S rRNA in the assembled 50S subunit and ribosome. In terms of biological role, forms part of the polypeptide exit tunnel. This Nostoc sp. (strain PCC 7120 / SAG 25.82 / UTEX 2576) protein is Large ribosomal subunit protein uL4.